The following is a 910-amino-acid chain: Bifunctional glucose-6-phosphate 1-dehydrogenase/6-phosphogluconolactonase (910 aa).

The 6-phosphogluconolactonase stretch occupies residues 1–170 (MDYENFVKSA…DFHIASLFPN (170 aa)). Residues 171 to 276 (IFYNIYMNNY…PATYLIDTSC (106 aa)) form a linker region. Residues 277–910 (TNENVNINNN…FYEDDLLDIN (634 aa)) are glucose-6-phosphate 1-dehydrogenase. NADP(+) is bound by residues 345–352 (GCSGDLAK), Arg379, and Lys548. D-glucose 6-phosphate is bound by residues Lys548, 578–582 (HYLGK), Glu616, and Asp635. His640 (proton acceptor) is an active-site residue. Positions 689-711 (ENFKEDENNDDESKKNHSYHDDP) are disordered. Lys742 is a binding site for NADP(+). Lys745 contacts D-glucose 6-phosphate. Arg755 contributes to the NADP(+) binding site. Gln779 serves as a coordination point for D-glucose 6-phosphate. 785–787 (YLK) is an NADP(+) binding site.

In the N-terminal section; belongs to the glucosamine/galactosamine-6-phosphate isomerase family. 6-phosphogluconolactonase subfamily. The protein in the C-terminal section; belongs to the glucose-6-phosphate dehydrogenase family. Homotetramer.

It catalyses the reaction 6-phospho-D-glucono-1,5-lactone + H2O = 6-phospho-D-gluconate + H(+). The catalysed reaction is D-glucose 6-phosphate + NADP(+) = 6-phospho-D-glucono-1,5-lactone + NADPH + H(+). It functions in the pathway carbohydrate degradation; pentose phosphate pathway; D-ribulose 5-phosphate from D-glucose 6-phosphate (oxidative stage): step 1/3. Its pathway is carbohydrate degradation; pentose phosphate pathway; D-ribulose 5-phosphate from D-glucose 6-phosphate (oxidative stage): step 2/3. With respect to regulation, G6PD activity is inhibited by glucosamine-6-phosphate, NADPH, and 4-(4-bromophenyl)-7-(3,4-dimethoxyphenyl)-4,6,7,8-tetrahydroquinoline-2,5(1 H,3H)-dione. G6PD and 6PGL activities can be reversibly inhibited by S-glutathionylation (in vitro). In terms of biological role, bifunctional enzyme which catalyzes the first two steps of the oxidative pentose-phosphate pathway, which represents a route for the dissimilation of carbohydrates besides glycolysis. The main function of this enzyme is to provide reducing power (NADPH) and pentose phosphates for fatty acid and nucleic acid synthesis. The protein is Bifunctional glucose-6-phosphate 1-dehydrogenase/6-phosphogluconolactonase of Plasmodium falciparum (isolate 3D7).